We begin with the raw amino-acid sequence, 468 residues long: MDRLPPPPPPPRQPLPRAQVLAEKAFSALEHFLHIEAVSGIVLLAAAGIALLWANSPASHSYHALWHTPLSFGIGSHLVSQSLHFWINDALMTIFFLVVGMEIRREIHEGALANVRLSALPMAAALGGVIVPALIYLAINTEMPQRQGWAVPTATDIAFAVGVLALLGKSIPGNVRVFLLALAIIDDIVAVLIIAVAFSGGLDYGGFLVAGTGILMVLGLQWIGVGTAYAYVVPGAILWLGMLKTGAHPTLAGVVLGMMTPVLPGRTRERPLDVAMRALLDLRARATARTPKPEHIAAPLKQLRHAQRELLPPVIRVQMALHPWVAYLVMPLFALANAGVSIDGVDLTSGGSLGAMFGVVLALVVGKPLGIVSVSWLAVRLGWCQLPPDVTWRGVCLVGLLAGIGFTMSIFIATLAFEDVNLLGAAKLGVLLASAIAATIGLTWGFIYARGRRPSMERADESTAAASD.

10 consecutive transmembrane segments (helical) span residues 32–52 (FLHI…IALL), 83–103 (LHFW…GMEI), 119–139 (ALPM…YLAI), 148–168 (GWAV…ALLG), 178–198 (FLLA…AVAF), 205–225 (GGFL…WIGV), 320–340 (ALHP…NAGV), 354–374 (GAMF…IVSV), 397–417 (LVGL…TLAF), and 428–448 (LGVL…GFIY).

This sequence belongs to the NhaA Na(+)/H(+) (TC 2.A.33) antiporter family.

It is found in the cell inner membrane. The catalysed reaction is Na(+)(in) + 2 H(+)(out) = Na(+)(out) + 2 H(+)(in). In terms of biological role, na(+)/H(+) antiporter that extrudes sodium in exchange for external protons. The sequence is that of Na(+)/H(+) antiporter NhaA from Cupriavidus necator (strain ATCC 17699 / DSM 428 / KCTC 22496 / NCIMB 10442 / H16 / Stanier 337) (Ralstonia eutropha).